The sequence spans 357 residues: UDP-N-acetylglucosamine--N-acetylmuramyl-(pentapeptide) pyrophosphoryl-undecaprenol N-acetylglucosamine transferase (357 aa).

Residues Thr-12–Gly-14, Asn-124, Arg-163, Ser-189, Ile-243, Ala-262–Glu-267, and Gln-288 each bind UDP-N-acetyl-alpha-D-glucosamine.

Belongs to the glycosyltransferase 28 family. MurG subfamily.

The protein localises to the cell inner membrane. The enzyme catalyses di-trans,octa-cis-undecaprenyl diphospho-N-acetyl-alpha-D-muramoyl-L-alanyl-D-glutamyl-meso-2,6-diaminopimeloyl-D-alanyl-D-alanine + UDP-N-acetyl-alpha-D-glucosamine = di-trans,octa-cis-undecaprenyl diphospho-[N-acetyl-alpha-D-glucosaminyl-(1-&gt;4)]-N-acetyl-alpha-D-muramoyl-L-alanyl-D-glutamyl-meso-2,6-diaminopimeloyl-D-alanyl-D-alanine + UDP + H(+). It functions in the pathway cell wall biogenesis; peptidoglycan biosynthesis. Functionally, cell wall formation. Catalyzes the transfer of a GlcNAc subunit on undecaprenyl-pyrophosphoryl-MurNAc-pentapeptide (lipid intermediate I) to form undecaprenyl-pyrophosphoryl-MurNAc-(pentapeptide)GlcNAc (lipid intermediate II). The sequence is that of UDP-N-acetylglucosamine--N-acetylmuramyl-(pentapeptide) pyrophosphoryl-undecaprenol N-acetylglucosamine transferase from Pseudomonas aeruginosa (strain LESB58).